We begin with the raw amino-acid sequence, 476 residues long: Aspartyl/glutamyl-tRNA(Asn/Gln) amidotransferase subunit B (476 aa).

It belongs to the GatB/GatE family. GatB subfamily. As to quaternary structure, heterotrimer of A, B and C subunits.

It carries out the reaction L-glutamyl-tRNA(Gln) + L-glutamine + ATP + H2O = L-glutaminyl-tRNA(Gln) + L-glutamate + ADP + phosphate + H(+). The catalysed reaction is L-aspartyl-tRNA(Asn) + L-glutamine + ATP + H2O = L-asparaginyl-tRNA(Asn) + L-glutamate + ADP + phosphate + 2 H(+). In terms of biological role, allows the formation of correctly charged Asn-tRNA(Asn) or Gln-tRNA(Gln) through the transamidation of misacylated Asp-tRNA(Asn) or Glu-tRNA(Gln) in organisms which lack either or both of asparaginyl-tRNA or glutaminyl-tRNA synthetases. The reaction takes place in the presence of glutamine and ATP through an activated phospho-Asp-tRNA(Asn) or phospho-Glu-tRNA(Gln). The protein is Aspartyl/glutamyl-tRNA(Asn/Gln) amidotransferase subunit B of Shouchella clausii (strain KSM-K16) (Alkalihalobacillus clausii).